We begin with the raw amino-acid sequence, 232 residues long: Ribose-5-phosphate isomerase A (232 aa).

Substrate contacts are provided by residues 28–31 (TGST), 83–86 (DGAD), and 96–99 (KGGG). Residue E105 is the Proton acceptor of the active site. K123 is a binding site for substrate.

This sequence belongs to the ribose 5-phosphate isomerase family. As to quaternary structure, homodimer.

It catalyses the reaction aldehydo-D-ribose 5-phosphate = D-ribulose 5-phosphate. It participates in carbohydrate degradation; pentose phosphate pathway; D-ribose 5-phosphate from D-ribulose 5-phosphate (non-oxidative stage): step 1/1. Catalyzes the reversible conversion of ribose-5-phosphate to ribulose 5-phosphate. The chain is Ribose-5-phosphate isomerase A from Rhizobium etli (strain CIAT 652).